Reading from the N-terminus, the 528-residue chain is Serine/threonine-protein kinase akt-2 (528 aa).

The PH domain occupies 12 to 115; sequence DIVIESWLHK…WIEAIQAVSS (104 aa). Residues 121 to 153 form a disordered region; sequence ENAGNTSMQEEDTNGNPSGESDVNMDATSTRSD. Positions 123–153 are enriched in polar residues; that stretch reads AGNTSMQEEDTNGNPSGESDVNMDATSTRSD. Residues 180 to 437 form the Protein kinase domain; that stretch reads FDFLKVLGQG…AREVSRAEFF (258 aa). Residues 186–194 and K209 contribute to the ATP site; that span reads LGQGTFGKV. The Proton acceptor role is filled by D303. Positions 438 to 515 constitute an AGC-kinase C-terminal domain; that stretch reads KDVDWEATLR…YYVSGSLERS (78 aa).

It belongs to the protein kinase superfamily. AGC Ser/Thr protein kinase family. RAC subfamily. As to quaternary structure, interacts with pdk-1, sgk-1, akt-1 and daf-16. Part of a complex containing sgk-1, akt-1 and akt-2. The cofactor is Mg(2+). As to expression, expressed in neurons, muscle cells of the pharynx, rectal gland cells, and spermatheca.

The catalysed reaction is L-seryl-[protein] + ATP = O-phospho-L-seryl-[protein] + ADP + H(+). It catalyses the reaction L-threonyl-[protein] + ATP = O-phospho-L-threonyl-[protein] + ADP + H(+). Phosphorylated and activated by pdk-1. Acts downstream of PI3 kinase age-1 and kinase pdk-1 in the daf-2/insulin receptor-like transduction pathway. Essential role in regulating developmental arrest at the dauer stage. Phosphorylates Forkhead-related daf-16 and the longevity-promoting skn-1 transcription factors, which inhibits their entry into the nucleus and antagonizes their functions. Role in immune function and pathogen resistance. Downstream of age-1 and together with akt-1 and sgk-1, promotes cell survival during embryonic development. Plays a role in maintaining the gonadal basement membrane through antagonizing akt-1 activity. The polypeptide is Serine/threonine-protein kinase akt-2 (Caenorhabditis elegans).